A 183-amino-acid chain; its full sequence is UPF0397 protein VFMJ11_1662 (183 aa).

5 helical membrane-spanning segments follow: residues 8 to 28, 41 to 61, 75 to 95, 110 to 130, and 147 to 167; these read VVVI…MFGI, AVLA…VGFI, WLTW…FPII, FLIF…TSAF, and LCII…FILN.

Belongs to the UPF0397 family.

Its subcellular location is the cell membrane. The sequence is that of UPF0397 protein VFMJ11_1662 from Aliivibrio fischeri (strain MJ11) (Vibrio fischeri).